The following is a 427-amino-acid chain: Flotillin-1 (427 aa).

A phosphoserine mark is found at S19, S163, and S385. At T387 the chain carries Phosphothreonine.

This sequence belongs to the band 7/mec-2 family. Flotillin subfamily. As to quaternary structure, heterooligomeric complex of flotillin-1 and flotillin-2 and caveolin-1 and caveolin-2. Interacts with ECPAS.

The protein resides in the cell membrane. Its subcellular location is the endosome. It localises to the membrane. The protein localises to the caveola. It is found in the melanosome. The protein resides in the membrane raft. In terms of biological role, may act as a scaffolding protein within caveolar membranes, functionally participating in formation of caveolae or caveolae-like vesicles. The chain is Flotillin-1 (FLOT1) from Sus scrofa (Pig).